The following is a 727-amino-acid chain: MDTKVETGGKCPVAHGPAGAKGRGNRDWWPEQLDVQILHQKNKIADPMGPDFDYAEEFRKLDYEALKSDLHALMTDSQDWWPADFGHYGGLFVRMAWHSAGTYRITDGRGGAGAGQQRFAPLNSWPDNANLDKARRLLWPIKQKYGNKISWADLFILTGNVALESMGFKTFGFAGGRADTWEPEELFWGPEGTWLGDERYSGERQLSEPLGAVQMGLIYVNPEGPNGNPDPIAAARDIRETFSRMAMNDEETVALIAGGHTFGKTHGAGDPSLIGAEPEGGALEDQGLGWKSKFGTGFGADTITGGPEVTWTQTPTRWSNFFFENLFNFEWELTKSPAGAHQWKAKNAEPSIPDAHDPSKKHLPTMLTTDLSLRFDPAYEKISRRFLENPDQFADAFARAWFKLTHRDMGPKVRYVGPEVPSEDLIWQDVIPPVDHPLVDDRDVADLKAKVIASGLSVQELVSTAWASASTFRGSDKRGGANGARIRLAPQKDWDVNHPAQLAKVLSVLEGFQQEFNAGQSAGKKISLADLIVLAGAAGVEKAAKAGGHDVTVPFTPGRTDASQEQTDVASFNALKPRADAFRNYLSGHQFMKPEEALVDRARLLTLTAPEMTVLIGGLRVLKAGQPEHGVLTRNPEALTNDFFVNLLDMRTQWAPVAGKEGVYEGRDRKSGELLWTGTRVDLIFGSHSQLRALAEVYAQSDIKEKFVKDFVAAWTKVMNADRFDLV.

Positions 1-26 (MDTKVETGGKCPVAHGPAGAKGRGNR) are disordered. A cross-link (tryptophyl-tyrosyl-methioninium (Trp-Tyr) (with M-245)) is located at residues 97–219 (WHSAGTYRIT…LGAVQMGLIY (123 aa)). The Proton acceptor role is filled by histidine 98. Residues 219–245 (YVNPEGPNGNPDPIAAARDIRETFSRM) constitute a cross-link (tryptophyl-tyrosyl-methioninium (Tyr-Met) (with W-97)). Residue histidine 260 participates in heme b binding.

Belongs to the peroxidase family. Peroxidase/catalase subfamily. In terms of assembly, homodimer or homotetramer. Requires heme b as cofactor. Formation of the three residue Trp-Tyr-Met cross-link is important for the catalase, but not the peroxidase activity of the enzyme.

It catalyses the reaction H2O2 + AH2 = A + 2 H2O. The enzyme catalyses 2 H2O2 = O2 + 2 H2O. In terms of biological role, bifunctional enzyme with both catalase and broad-spectrum peroxidase activity. In Allorhizobium ampelinum (strain ATCC BAA-846 / DSM 112012 / S4) (Agrobacterium vitis (strain S4)), this protein is Catalase-peroxidase.